The sequence spans 358 residues: Endoplasmic reticulum junction formation protein lunapark-B (358 aa).

At 1–45 (MGAIISRWKTKLTTVEQLENIDKEIKQLEEFRAKNQRLQKLWVGR) the chain is on the cytoplasmic side. Positions 9–41 (KTKLTTVEQLENIDKEIKQLEEFRAKNQRLQKL) form a coiled coil. The chain crosses the membrane as a helical span at residues 46-66 (LLLYSSALYLLISLFVYLLYL). Over 67–69 (PEQ) the chain is Lumenal. Residues 70–90 (WLLRLAMALPFFIYPVLVWFI) form a helical membrane-spanning segment. Over 91 to 358 (RRFLIFLFSK…SRGMDKHGRA (268 aa)) the chain is Cytoplasmic. The stretch at 99 to 128 (SKRSERNNDKLEDLKATKKKILEEVMETET) forms a coiled coil. A C4-type; plays a role in ER morphology zinc finger spans residues 275-300 (CQQCFSHNGMALKEEFEYLAFRCAYC). Residues 320–358 (NFEKRLRAESSTPGPAPHSATDTEESAPPSRGMDKHGRA) are disordered.

It belongs to the lunapark family. As to quaternary structure, homodimer; homodimerization requires the C4-type zinc finger motif and decreases during mitosis in a phosphorylation-dependent manner. Post-translationally, phosphorylated. Phosphorylation occurs during interphase. Phosphorylation also occurs during mitosis; these phosphorylations reduce both its homodimerization and the ER three-way tubular junction formation.

It localises to the endoplasmic reticulum membrane. In terms of biological role, endoplasmic reticulum (ER)-shaping membrane protein that plays a role in determining ER morphology. Involved in the stabilization of nascent three-way ER tubular junctions within the ER network. May also play a role as a curvature-stabilizing protein within three-way ER tubular junction network. This Takifugu rubripes (Japanese pufferfish) protein is Endoplasmic reticulum junction formation protein lunapark-B (lnpkb).